Here is a 240-residue protein sequence, read N- to C-terminus: UDP-2,3-diacylglucosamine hydrolase (240 aa).

D8, H10, D41, N79, and H114 together coordinate Mn(2+). Position 79 to 80 (79 to 80 (NR)) interacts with substrate. The substrate site is built by D122, S160, N164, K167, and H195. Mn(2+) contacts are provided by H195 and H197.

This sequence belongs to the LpxH family. It depends on Mn(2+) as a cofactor.

Its subcellular location is the cell inner membrane. The catalysed reaction is UDP-2-N,3-O-bis[(3R)-3-hydroxytetradecanoyl]-alpha-D-glucosamine + H2O = 2-N,3-O-bis[(3R)-3-hydroxytetradecanoyl]-alpha-D-glucosaminyl 1-phosphate + UMP + 2 H(+). The protein operates within glycolipid biosynthesis; lipid IV(A) biosynthesis; lipid IV(A) from (3R)-3-hydroxytetradecanoyl-[acyl-carrier-protein] and UDP-N-acetyl-alpha-D-glucosamine: step 4/6. In terms of biological role, hydrolyzes the pyrophosphate bond of UDP-2,3-diacylglucosamine to yield 2,3-diacylglucosamine 1-phosphate (lipid X) and UMP by catalyzing the attack of water at the alpha-P atom. Involved in the biosynthesis of lipid A, a phosphorylated glycolipid that anchors the lipopolysaccharide to the outer membrane of the cell. This is UDP-2,3-diacylglucosamine hydrolase from Salmonella typhi.